The following is a 393-amino-acid chain: Chorismate synthase (393 aa).

NADP(+) contacts are provided by arginine 40 and arginine 46. Residues 129–131, 249–250, glycine 301, 316–320, and arginine 342 each bind FMN; these read RSS, QA, and KPIPT.

Belongs to the chorismate synthase family. As to quaternary structure, homotetramer. FMNH2 serves as cofactor.

The catalysed reaction is 5-O-(1-carboxyvinyl)-3-phosphoshikimate = chorismate + phosphate. It participates in metabolic intermediate biosynthesis; chorismate biosynthesis; chorismate from D-erythrose 4-phosphate and phosphoenolpyruvate: step 7/7. In terms of biological role, catalyzes the anti-1,4-elimination of the C-3 phosphate and the C-6 proR hydrogen from 5-enolpyruvylshikimate-3-phosphate (EPSP) to yield chorismate, which is the branch point compound that serves as the starting substrate for the three terminal pathways of aromatic amino acid biosynthesis. This reaction introduces a second double bond into the aromatic ring system. The chain is Chorismate synthase from Geobacter metallireducens (strain ATCC 53774 / DSM 7210 / GS-15).